A 177-amino-acid chain; its full sequence is Decaprenylphosphoryl-5-phosphoribose phosphatase (177 aa).

Helical transmembrane passes span 35–55 (HFGE…IALP), 62–82 (LVAG…KRLV), 124–144 (GLPL…LLGV), and 150–170 (VAVG…VGGG).

The protein belongs to the PA-phosphatase related phosphoesterase family.

It localises to the cell membrane. It catalyses the reaction trans,octa-cis-decaprenylphospho-beta-D-ribofuranose 5-phosphate + H2O = trans,octa-cis-decaprenylphospho-beta-D-ribofuranose + phosphate. It participates in cell wall biogenesis; cell wall polysaccharide biosynthesis. Phosphatase involved in the biosynthesis of decaprenylphosphoryl arabinose (DPA), which serves as the arabinose donor for the biosynthesis of arabinogalactan, the major mycobacterial cell wall polysaccharide. Catalyzes the dephosphorylation of decaprenylphosphoryl-5-phosphoribose (DPPR) to decaprenyl-phosphoribose (DPR). The protein is Decaprenylphosphoryl-5-phosphoribose phosphatase of Mycobacterium tuberculosis (strain CDC 1551 / Oshkosh).